Consider the following 126-residue polypeptide: Holo-[acyl-carrier-protein] synthase (126 aa).

Positions 8 and 56 each coordinate Mg(2+).

The protein belongs to the P-Pant transferase superfamily. AcpS family. Mg(2+) is required as a cofactor.

The protein resides in the cytoplasm. The enzyme catalyses apo-[ACP] + CoA = holo-[ACP] + adenosine 3',5'-bisphosphate + H(+). Transfers the 4'-phosphopantetheine moiety from coenzyme A to a Ser of acyl-carrier-protein. This is Holo-[acyl-carrier-protein] synthase from Clostridium tetani (strain Massachusetts / E88).